A 488-amino-acid chain; its full sequence is Probable glycine dehydrogenase (decarboxylating) subunit 2 (488 aa).

Lys274 carries the N6-(pyridoxal phosphate)lysine modification.

It belongs to the GcvP family. C-terminal subunit subfamily. In terms of assembly, the glycine cleavage system is composed of four proteins: P, T, L and H. In this organism, the P 'protein' is a heterodimer of two subunits. Pyridoxal 5'-phosphate is required as a cofactor.

It carries out the reaction N(6)-[(R)-lipoyl]-L-lysyl-[glycine-cleavage complex H protein] + glycine + H(+) = N(6)-[(R)-S(8)-aminomethyldihydrolipoyl]-L-lysyl-[glycine-cleavage complex H protein] + CO2. In terms of biological role, the glycine cleavage system catalyzes the degradation of glycine. The P protein binds the alpha-amino group of glycine through its pyridoxal phosphate cofactor; CO(2) is released and the remaining methylamine moiety is then transferred to the lipoamide cofactor of the H protein. The sequence is that of Probable glycine dehydrogenase (decarboxylating) subunit 2 from Listeria monocytogenes serotype 4b (strain F2365).